The following is a 102-amino-acid chain: Class II hydrophobin 3 (102 aa).

The first 16 residues, 1–16 (MQFLAVAALLFTTALA), serve as a signal peptide directing secretion. Disulfide bonds link C33-C83, C44-C74, C45-C57, and C84-C95.

Belongs to the cerato-ulmin hydrophobin family. As to quaternary structure, homotetramer. Further self-assembles to form highly ordered films at water-air interfaces through intermolecular interactions. Expressed in the conidia, vegetative growth and induction growth stages.

It is found in the secreted. Its subcellular location is the cell wall. It localises to the cytoplasm. Its function is as follows. Aerial growth, conidiation, and dispersal of filamentous fungi in the environment rely upon a capability of their secreting small amphipathic proteins called hydrophobins (HPBs) with low sequence identity. Class I can self-assemble into an outermost layer of rodlet bundles on aerial cell surfaces, conferring cellular hydrophobicity that supports fungal growth, development and dispersal; whereas Class II form highly ordered films at water-air interfaces through intermolecular interactions but contribute nothing to the rodlet structure. Hbf3 is a class II hydrophobin that has a role in vegetative growth and asexual development. This Hypocrea jecorina (strain QM6a) (Trichoderma reesei) protein is Class II hydrophobin 3.